A 717-amino-acid polypeptide reads, in one-letter code: F-box only protein 42 (717 aa).

Residues 1-30 (MASSSDSEDDSVMAVDQEETALEGTMEQDE) are compositionally biased toward acidic residues. The segment at 1 to 34 (MASSSDSEDDSVMAVDQEETALEGTMEQDEDPHP) is disordered. The 50-residue stretch at 44–93 (NRSMSELPEEVLEYILSFLSPYQEHKTAALVCKQWYRLIKGVAHQCYHGF) folds into the F-box domain. 4 Kelch repeats span residues 132–184 (SMYV…VYKD), 186–242 (LVLF…VIGD), 244–293 (MIVF…VIDD), and 295–342 (TLLI…LWCH). The disordered stretch occupies residues 361-452 (RAPLSPSLNS…NLSPGTVAVG (92 aa)). The segment covering 363-376 (PLSPSLNSRPSPIS) has biased composition (low complexity). Phosphoserine is present on residues Ser-365 and Ser-373. A Phosphothreonine modification is found at Thr-378. Over residues 416–426 (QRQTPSGSREG) the composition is skewed to polar residues. Ser-552 bears the Phosphoserine mark. Residues 570 to 595 (GPSASAALSPPLGSSPSSPGSQSLSS) are compositionally biased toward low complexity. The segment at 570-632 (GPSASAALSP…HHPPQSLNVG (63 aa)) is disordered.

In terms of assembly, component of some SCF complex, composed of CUL1, SKP1, RBX1 and FBXO42. Interacts (via the kelch domain) with p53/TP53; interaction is direct.

Its function is as follows. Substrate-recognition component of some SCF (SKP1-CUL1-F-box protein)-type E3 ubiquitin ligase complex. Specifically recognizes p53/TP53, promoting its ubiquitination and degradation. The chain is F-box only protein 42 (Fbxo42) from Mus musculus (Mouse).